Here is an 883-residue protein sequence, read N- to C-terminus: Phosphoenolpyruvate carboxylase (883 aa).

Residues His-138 and Lys-546 contribute to the active site.

It belongs to the PEPCase type 1 family. In terms of assembly, homotetramer. Mg(2+) is required as a cofactor.

The enzyme catalyses oxaloacetate + phosphate = phosphoenolpyruvate + hydrogencarbonate. Its activity is regulated as follows. The enzyme has distinct binding sites for each of the allosteric effectors such as acetyl-CoA, fructose 1,6-bisphosphate, guanosine 3'-diphosphate 5'-diphosphate, long chain fatty acids, and L-aspartate. Its function is as follows. Forms oxaloacetate, a four-carbon dicarboxylic acid source for the tricarboxylic acid cycle. This Escherichia coli O157:H7 protein is Phosphoenolpyruvate carboxylase.